The following is a 365-amino-acid chain: Glycosyltransferase 8 domain-containing protein 1 (365 aa).

The Cytoplasmic segment spans residues 1 to 4; it reads MTVR. Residues 5 to 22 form a helical; Signal-anchor for type II membrane protein membrane-spanning segment; it reads RVNVVILVLLVVAFLIVL. At 23-365 the chain is on the lumenal side; it reads HRNLLNLNDF…HPIRKHVEEK (343 aa). N-linked (GlcNAc...) asparagine glycans are attached at residues Asn102, Asn181, Asn245, and Asn253.

Belongs to the glycosyltransferase 8 family.

Its subcellular location is the membrane. This chain is Glycosyltransferase 8 domain-containing protein 1 (glt8d1), found in Danio rerio (Zebrafish).